Reading from the N-terminus, the 188-residue chain is F-box only protein 36 (188 aa).

In terms of domain architecture, F-box spans 91-137 (FDFLERLSDDLLLTIISYLDLEDIARLCQTSHRFAKLCMSDKLWEQI).

As to quaternary structure, directly interacts with SKP1 and CUL1.

In terms of biological role, substrate-recognition component of the SCF (SKP1-CUL1-F-box protein)-type E3 ubiquitin ligase complex. In Homo sapiens (Human), this protein is F-box only protein 36 (FBXO36).